The sequence spans 359 residues: MTKQVLVELGERSYPIEIGQNLFSNSEPLARYLQHKNILIVTNETIAPLYLQSVEAMLSDFACATPVILPDGEQYKTLEQMNAIFTSLLEQNLGRDTVLIALGGGVIGDMTGFAAASYQRGVDFIQIPTTLLSQVDSSVGGKTAVNHPLGKNMIGAFYQPKCVLIDTNCLSTLPKREFAAGMAEVIKYGVIWDAEFFQWLENNVEALKSLDTQALEYAISRCCEIKAEVVEKDETEQAVRALLNLGHTFGHAIEAEMGYGVWLHGEAVSAGTVLAAMTSNKLGLVDESIVCRITALLAAFDLPITAPETMDFEQFIKHMRRDKKVLKGQLRLVLPEGIGQAGIYSDVTDELLEEVINCA.

Residues Asp71–Lys76, Gly105–Asp109, Thr129–Thr130, Lys142, Lys151, and Cys169–Thr172 each bind NAD(+). Glu184, His247, and His264 together coordinate Zn(2+).

Belongs to the sugar phosphate cyclases superfamily. Dehydroquinate synthase family. Co(2+) serves as cofactor. Zn(2+) is required as a cofactor. Requires NAD(+) as cofactor.

Its subcellular location is the cytoplasm. It carries out the reaction 7-phospho-2-dehydro-3-deoxy-D-arabino-heptonate = 3-dehydroquinate + phosphate. It participates in metabolic intermediate biosynthesis; chorismate biosynthesis; chorismate from D-erythrose 4-phosphate and phosphoenolpyruvate: step 2/7. Catalyzes the conversion of 3-deoxy-D-arabino-heptulosonate 7-phosphate (DAHP) to dehydroquinate (DHQ). This chain is 3-dehydroquinate synthase, found in Shewanella halifaxensis (strain HAW-EB4).